A 476-amino-acid chain; its full sequence is Serine protease HTRA1B (476 aa).

A signal peptide spans 1–19 (MRLLILCASIILVPLLCDA). The IGFBP N-terminal domain maps to 25-109 (YVIGCPERCD…RGKTGVCVCK (85 aa)). Disulfide bonds link Cys-29-Cys-54, Cys-33-Cys-56, Cys-38-Cys-57, Cys-45-Cys-60, Cys-68-Cys-85, and Cys-79-Cys-106. In terms of domain architecture, Kazal-like spans 94–153 (TTTVRRRGKTGVCVCKSSEPVCGSDGVSYRNICELKRVSNRAQKLQQPPIIFIQRGACGK). Positions 200–360 (GSGFVVSEDG…IPSDKIRQFL (161 aa)) are serine protease. Residues His-216, Asp-246, and Ser-324 each act as charge relay system in the active site. Residues 361 to 463 (AESHDRQAKG…LRAVVRRGNE (103 aa)) form the PDZ domain.

This sequence belongs to the peptidase S1C family. In terms of assembly, forms homotrimers. In the presence of substrate, may form higher-order multimers in a PDZ-independent manner.

Its subcellular location is the secreted. The protein resides in the cytoplasm. The protein localises to the cytosol. Serine protease with a variety of targets, including extracellular matrix proteins and proteoglycans. Through cleavage of proteoglycans, may release soluble FGF-glycosaminoglycan complexes that promote the range and intensity of FGF signals in the extracellular space. Regulates the availability of insulin-like growth factors (IGFs) by cleaving IGF-binding proteins. Inhibits signaling mediated by TGF-beta family members. Consequently, may regulate many physiological processes. Intracellularly, degrades TSC2, leading to the activation of TSC2 downstream targets. The protein is Serine protease HTRA1B (htra1b) of Danio rerio (Zebrafish).